The chain runs to 349 residues: MDENKSKALQAALSQIEKQFGKNTVMRLGDNTVQAVEAVSTGSLTLDIALGIGGLPKGRIIEIYGPESSGKTTMTLQAIAQCQKSGGTCAFIDAEHALDPQYARKLGVDIDNLLVSQPDNGEQALEIADMLVRSGAIDLIVVDSVAALTPKAEIEGEMGDSHMGLQARLMSQALRKITGNAKRSNCMVIFINQIRMKIGVMFGSPETTTGGNALKFYASVRLDIRRIGQVKEGDEIVGSETKVKVVKNKMAPPFKEAIFQILYGKGTNQLGELVDLAVQQDIVQKAGAWYSYQGNKIGQGKNNVIRYFEENTQIAEEIERNIREQLLTTGTNGAVQIEDEEEPDLLLES.

Residue 65–72 (GPESSGKT) participates in ATP binding.

This sequence belongs to the RecA family.

The protein localises to the cytoplasm. In terms of biological role, can catalyze the hydrolysis of ATP in the presence of single-stranded DNA, the ATP-dependent uptake of single-stranded DNA by duplex DNA, and the ATP-dependent hybridization of homologous single-stranded DNAs. It interacts with LexA causing its activation and leading to its autocatalytic cleavage. This chain is Protein RecA, found in Acinetobacter baumannii (strain AB307-0294).